The chain runs to 124 residues: Small ribosomal subunit protein uS13 (124 aa).

The tract at residues 97–124 (PVRGQRTKTNARTRKGPKRTIAGKKKAR) is disordered.

It belongs to the universal ribosomal protein uS13 family. In terms of assembly, part of the 30S ribosomal subunit. Forms a loose heterodimer with protein S19. Forms two bridges to the 50S subunit in the 70S ribosome.

Located at the top of the head of the 30S subunit, it contacts several helices of the 16S rRNA. In the 70S ribosome it contacts the 23S rRNA (bridge B1a) and protein L5 of the 50S subunit (bridge B1b), connecting the 2 subunits; these bridges are implicated in subunit movement. Contacts the tRNAs in the A and P-sites. This Mycolicibacterium gilvum (strain PYR-GCK) (Mycobacterium gilvum (strain PYR-GCK)) protein is Small ribosomal subunit protein uS13.